The following is a 668-amino-acid chain: Probable syringafactin export ATP-binding/permease protein SyfD (668 aa).

The ABC transporter domain maps to 22-260 (LRLQQVSRSF…APEAQPATPP (239 aa)). ATP is bound at residue 58-65 (GASGSGKS). Residues 242–263 (RRTAQTTQPAPEAQPATPPGPA) are disordered. Over residues 245-256 (AQTTQPAPEAQP) the composition is skewed to low complexity. Helical transmembrane passes span 267–287 (LLAS…ALIS), 293–313 (LLTM…SAIG), 541–561 (LTLL…IGVM), 602–622 (MGGV…TLFV), and 631–651 (LASV…FGFV).

Belongs to the ABC transporter superfamily. Macrolide exporter (TC 3.A.1.122) family. In terms of assembly, probably part of a tripartite efflux system, which is composed of an inner membrane transporter, a periplasmic membrane fusion protein, and an outer membrane component.

The protein localises to the cell inner membrane. Its function is as follows. Probably involved in the export of syringafactins. The sequence is that of Probable syringafactin export ATP-binding/permease protein SyfD from Pseudomonas syringae pv. tomato (strain ATCC BAA-871 / DC3000).